The following is a 491-amino-acid chain: Rab5 GDP/GTP exchange factor (491 aa).

The interval 1-74 (MSLKSERRGI…EEEAFASSQS (74 aa)) is interaction with ubiquitinated proteins. The segment at 13 to 47 (DQSDLLCKKGCGYYGNPAWQGFCSKCWREEYHKAR) adopts an A20-type zinc-finger fold. Positions 19, 23, 35, and 38 each coordinate Zn(2+). The disordered stretch occupies residues 66-85 (EEAFASSQSSQGAQSLTFSK). A compositionally biased stretch (low complexity) spans 69–84 (FASSQSSQGAQSLTFS). 2 positions are modified to phosphoserine: Ser124 and Ser132. An N6-acetyllysine mark is found at Lys151 and Lys170. The region spanning 232–375 (EKKDLAIQKR…IEKLDAQSLN (144 aa)) is the VPS9 domain. 4 positions are modified to phosphoserine: Ser373, Ser377, Ser390, and Ser400. The interval 462 to 491 (PPNQPLAAIDSENVENDKLPPPLQPQVYAG) is disordered.

Interacts with RGS14; the interaction is GTP-dependent. Heterodimer with RABEP1. The heterodimer binds RAB4A and RAB5A that have been activated by GTP-binding. Interacts with RAB21, and with 100-fold lower affinity also with RAB22. Binds TSC2, GGA1, GGA2, GGA3, AP1G1 and AP1G2. Interacts with ubiquitinated EGFR. Post-translationally, monoubiquitinated.

Its subcellular location is the cytoplasm. The protein resides in the early endosome. The protein localises to the recycling endosome. Functionally, rab effector protein acting as linker between gamma-adaptin, RAB4A or RAB5A. Involved in endocytic membrane fusion and membrane trafficking of recycling endosomes. Stimulates nucleotide exchange on RAB5A. Can act as a ubiquitin ligase. In Homo sapiens (Human), this protein is Rab5 GDP/GTP exchange factor (RABGEF1).